Consider the following 316-residue polypeptide: Taste receptor type 2 member 3 (316 aa).

Residues 1-7 (MLGFTEG) are Extracellular-facing. A helical membrane pass occupies residues 8–28 (IFLVLTVTEFILGNLVNGFIV). Residues 29 to 50 (SVNGSHWFKSKKISLSDFIITS) are Cytoplasmic-facing. Residues 51 to 71 (LALFRIFLLWIIFTDSLIIVF) form a helical membrane-spanning segment. Over 72–86 (SYHTHDSGIRMQLID) the chain is Extracellular. A helical membrane pass occupies residues 87 to 107 (VFWTFTNHFSIWLISCLSVFY). Residues 108 to 128 (CLKIATFSHPSFLWLKWRASR) are Cytoplasmic-facing. Residues 129–149 (VVVGMLWGALVLSCVCTMSLM) traverse the membrane as a helical segment. Over 150–186 (NEFKIYSALTGSRDTQNMTEYIRLKRHEYNLMHVLGN) the chain is Extracellular. Residue Asn-166 is glycosylated (N-linked (GlcNAc...) asparagine). A helical transmembrane segment spans residues 187-207 (LWKIPSLIVSLIAYFLLLLSL). Residues 208-234 (GKHTQQMQKYSVGSRDQSAEAHRRAMR) are Cytoplasmic-facing. Residues 235 to 255 (IILSFLLFFLFYFLSFVILSS) form a helical membrane-spanning segment. The Extracellular segment spans residues 256-266 (SRFLPETKIAR). Residues 267-287 (IIGVVITMSYLVGDSLILILG) form a helical membrane-spanning segment. The Cytoplasmic segment spans residues 288–316 (NNKLKQTFVAILPCECGHPKPGSKRFFAS).

The protein belongs to the G-protein coupled receptor T2R family.

The protein resides in the membrane. Gustducin-coupled receptor implicated in the perception of bitter compounds in the oral cavity and the gastrointestinal tract. Signals through PLCB2 and the calcium-regulated cation channel TRPM5. In Rattus norvegicus (Rat), this protein is Taste receptor type 2 member 3.